Here is a 491-residue protein sequence, read N- to C-terminus: UDP-N-acetylmuramate--L-alanine ligase (491 aa).

126 to 132 (GTHGKTT) contacts ATP.

Belongs to the MurCDEF family.

The protein resides in the cytoplasm. The enzyme catalyses UDP-N-acetyl-alpha-D-muramate + L-alanine + ATP = UDP-N-acetyl-alpha-D-muramoyl-L-alanine + ADP + phosphate + H(+). It functions in the pathway cell wall biogenesis; peptidoglycan biosynthesis. Its function is as follows. Cell wall formation. The protein is UDP-N-acetylmuramate--L-alanine ligase of Escherichia coli (strain SMS-3-5 / SECEC).